We begin with the raw amino-acid sequence, 427 residues long: UPF0229 protein YeaH (427 aa).

Residues Asn79–Arg90 are compositionally biased toward basic and acidic residues. Residues Asn79–Glu110 are disordered. Positions Gln92–Gln102 are enriched in gly residues.

This sequence belongs to the UPF0229 family.

In Shigella boydii serotype 18 (strain CDC 3083-94 / BS512), this protein is UPF0229 protein YeaH.